A 693-amino-acid chain; its full sequence is Histone-lysine N-methyltransferase, H3 lysine-9 specific SUVH7 (693 aa).

Disordered regions lie at residues 64 to 99 and 111 to 175; these read WYDG…PPEM and DSSN…AETE. The a.T hook DNA-binding region spans 129–141; that stretch reads KRGRGRPKGSKNS. Residues 227-373 form the YDG domain; it reads GAVPGIHVGD…FKEFRFKLVR (147 aa). Residues 454-516 enclose the Pre-SET domain; the sequence is QSLGCQNCRH…HCPTRLVQTG (63 aa). Zn(2+) contacts are provided by Cys-458, Cys-461, Cys-466, Cys-471, Cys-473, Cys-498, Cys-502, Cys-504, and Cys-508. The SET domain maps to 519–660; it reads LHLEVFKTRN…PMTELTYDYG (142 aa). Residues 529 to 531, Asp-562, Tyr-564, Arg-614, and 617 to 618 each bind S-adenosyl-L-methionine; these read CGW and NH. Residues Cys-620, Cys-681, Cys-683, and Cys-688 each contribute to the Zn(2+) site. The region spanning 677 to 693 is the Post-SET domain; it reads GKKTCLCGSVKCRGSFT.

Belongs to the class V-like SAM-binding methyltransferase superfamily. Histone-lysine methyltransferase family. Suvar3-9 subfamily.

The protein localises to the nucleus. It is found in the chromosome. It localises to the centromere. It carries out the reaction N(6)-methyl-L-lysyl(9)-[histone H3] + S-adenosyl-L-methionine = N(6),N(6)-dimethyl-L-lysyl(9)-[histone H3] + S-adenosyl-L-homocysteine + H(+). The enzyme catalyses L-lysyl(9)-[histone H3] + S-adenosyl-L-methionine = N(6)-methyl-L-lysyl(9)-[histone H3] + S-adenosyl-L-homocysteine + H(+). Histone methyltransferase. Methylates 'Lys-9' of histone H3. H3 'Lys-9' methylation represents a specific tag for epigenetic transcriptional repression. This Arabidopsis thaliana (Mouse-ear cress) protein is Histone-lysine N-methyltransferase, H3 lysine-9 specific SUVH7 (SUVH7).